Here is an 81-residue protein sequence, read N- to C-terminus: Metallocarboxypeptidase inhibitor (81 aa).

Positions 1–15 (MFLLVFLCCLHLVIS) are cleaved as a signal peptide. Disulfide bonds link Cys25–Cys48, Cys32–Cys76, Cys33–Cys57, and Cys36–Cys72.

Functionally, tightly binding, competitive inhibitor of different types of pancreatic-like carboxypeptidases. Inhibits human CPA4. This is Metallocarboxypeptidase inhibitor from Hirudo medicinalis (Medicinal leech).